A 295-amino-acid polypeptide reads, in one-letter code: Nucleotide-binding protein LSEI_0959 (295 aa).

Position 12–19 (12–19) interacts with ATP; sequence GMSGAGKT. 62–65 serves as a coordination point for GTP; it reads DLRS.

It belongs to the RapZ-like family.

Its function is as follows. Displays ATPase and GTPase activities. The protein is Nucleotide-binding protein LSEI_0959 of Lacticaseibacillus paracasei (strain ATCC 334 / BCRC 17002 / CCUG 31169 / CIP 107868 / KCTC 3260 / NRRL B-441) (Lactobacillus paracasei).